We begin with the raw amino-acid sequence, 893 residues long: Translation initiation factor IF-2 (893 aa).

Disordered stretches follow at residues 135–169 (KAKAKADAEAKAKAKVLTEKPVQESAEDKAAKAEE) and 201–300 (ENEK…ESMD). Residues 201-224 (ENEKRWAEEEKARKEAEKTVDHHV) show a composition bias toward basic and acidic residues. A compositionally biased stretch (low complexity) spans 251-265 (PSANAGNNANANAGA). The 170-residue stretch at 393 to 562 (SRAPVVTIMG…LLEAEVLELK (170 aa)) folds into the tr-type G domain. The tract at residues 402–409 (GHVDHGKT) is G1. 402 to 409 (GHVDHGKT) provides a ligand contact to GTP. Residues 427-431 (GITQH) are G2. Residues 448 to 451 (DTPG) are G3. Residues 448 to 452 (DTPGH) and 502 to 505 (NKMD) contribute to the GTP site. The tract at residues 502-505 (NKMD) is G4. The G5 stretch occupies residues 538-540 (SAK).

The protein belongs to the TRAFAC class translation factor GTPase superfamily. Classic translation factor GTPase family. IF-2 subfamily.

Its subcellular location is the cytoplasm. One of the essential components for the initiation of protein synthesis. Protects formylmethionyl-tRNA from spontaneous hydrolysis and promotes its binding to the 30S ribosomal subunits. Also involved in the hydrolysis of GTP during the formation of the 70S ribosomal complex. In Shewanella halifaxensis (strain HAW-EB4), this protein is Translation initiation factor IF-2.